Here is a 1894-residue protein sequence, read N- to C-terminus: 1,3-beta-glucan synthase component bgs2 (1894 aa).

Disordered stretches follow at residues 1-53 (MSWH…DSNK) and 282-310 (GPKIKQAKKKQKRKSNKAETEGTNEPETS). The span at 32 to 51 (EFNNPGEESTYPQANSWNDS) shows a compositional bias: polar residues. Positions 286 to 296 (KQAKKKQKRKS) are enriched in basic residues. Helical transmembrane passes span 530–550 (VSLGGAVATLLMLLATIFEWI), 566–586 (FLILILFFILNVAPTVFVFGF), 600–620 (VAIVHFIFSVFTFIYFSLVPL), 655–675 (VSWGLWLLVFGAKFTESYFFL), 710–730 (ILLGIMYVTDLVLFFLDTYLW), 731–751 (YILVNTVFSVARSFFLGISIW), 1338–1358 (IFIMLSVQLFMVVLVNLGGMY), 1394–1414 (CIISIFIVFFISFVPLTVQEL), 1476–1498 (LLFSRFAGPSIYLGSRTLLMLLF), 1503–1525 (VWIPHLIYFWISTLAMCISPFIF), 1598–1618 (FTEIFIPLMLVPLTLVSYFFI), 1637–1657 (ILILAFLPIIVAAVVSMTFAG), 1673–1693 (FGAVLAALAHGITVFMFIIVF), 1697–1717 (WYLEAWCLAKTVLSMLCIIAI), 1778–1798 (DFFLCHLLLFLMLPVLLIPFI), and 1837–1857 (TMFFLLLIAFLALIIIPLVVA).

This sequence belongs to the glycosyltransferase 48 family. In terms of assembly, component of the 1,3-beta-glucan synthase (GS) complex, composed of at least the alternate catalytic subunits bgs1, bgs2, bgs3, and bgs4, and a regulatory subunit chr4.

The protein localises to the prospore membrane. It catalyses the reaction [(1-&gt;3)-beta-D-glucosyl](n) + UDP-alpha-D-glucose = [(1-&gt;3)-beta-D-glucosyl](n+1) + UDP + H(+). In terms of biological role, alternate catalytic subunit of the 1,3-beta-glucan synthase (GS) complex. Synthesizes 1,3-beta-glucan, a major structural component of the yeast cell wall. Has a role in ascospore development where it is required for the assembly of a functional spore wall. The polypeptide is 1,3-beta-glucan synthase component bgs2 (Schizosaccharomyces pombe (strain 972 / ATCC 24843) (Fission yeast)).